Reading from the N-terminus, the 210-residue chain is MKDPIDLYMNTLVPMVVEQTSRGERAYDIYSRMLKERIIFLSGPVHDGMSSLICAQLLFLEAENPSKEIAMYINSPGGVVTSGLSIYDTMQYIRPKVSTLVIGQAASMGSLLLTAGEKGMRFSLPNSRVMVHQPSGGYQGQATDIMIHARETEKLKRRLNEIYVRHTGQDLETVEAALERDNFMSAEDAKAWGLIDEILESRNRPDDTAK.

S107 serves as the catalytic Nucleophile. H132 is a catalytic residue.

Belongs to the peptidase S14 family. In terms of assembly, fourteen ClpP subunits assemble into 2 heptameric rings which stack back to back to give a disk-like structure with a central cavity, resembling the structure of eukaryotic proteasomes.

The protein resides in the cytoplasm. It carries out the reaction Hydrolysis of proteins to small peptides in the presence of ATP and magnesium. alpha-casein is the usual test substrate. In the absence of ATP, only oligopeptides shorter than five residues are hydrolyzed (such as succinyl-Leu-Tyr-|-NHMec, and Leu-Tyr-Leu-|-Tyr-Trp, in which cleavage of the -Tyr-|-Leu- and -Tyr-|-Trp bonds also occurs).. Cleaves peptides in various proteins in a process that requires ATP hydrolysis. Has a chymotrypsin-like activity. Plays a major role in the degradation of misfolded proteins. This chain is ATP-dependent Clp protease proteolytic subunit, found in Cereibacter sphaeroides (strain ATCC 17029 / ATH 2.4.9) (Rhodobacter sphaeroides).